A 431-amino-acid chain; its full sequence is Enolase (431 aa).

Q163 provides a ligand contact to (2R)-2-phosphoglycerate. E205 serves as the catalytic Proton donor. D242, E288, and D315 together coordinate Mg(2+). The (2R)-2-phosphoglycerate site is built by K340, R369, S370, and K391. K340 acts as the Proton acceptor in catalysis.

The protein belongs to the enolase family. It depends on Mg(2+) as a cofactor.

The protein resides in the cytoplasm. It is found in the secreted. The protein localises to the cell surface. It carries out the reaction (2R)-2-phosphoglycerate = phosphoenolpyruvate + H2O. It functions in the pathway carbohydrate degradation; glycolysis; pyruvate from D-glyceraldehyde 3-phosphate: step 4/5. Catalyzes the reversible conversion of 2-phosphoglycerate (2-PG) into phosphoenolpyruvate (PEP). It is essential for the degradation of carbohydrates via glycolysis. The protein is Enolase of Bacillus cereus (strain B4264).